Here is a 193-residue protein sequence, read N- to C-terminus: Ribonuclease HII (193 aa).

Residues 15–193 form the RNase H type-2 domain; it reads YIVAGIDEAG…PYHRRSFKCC (179 aa). A divalent metal cation-binding residues include Asp-21, Glu-22, and Asp-112.

Belongs to the RNase HII family. Mn(2+) is required as a cofactor. Requires Mg(2+) as cofactor.

Its subcellular location is the cytoplasm. The catalysed reaction is Endonucleolytic cleavage to 5'-phosphomonoester.. Its function is as follows. Endonuclease that specifically degrades the RNA of RNA-DNA hybrids. The sequence is that of Ribonuclease HII from Rickettsia felis (strain ATCC VR-1525 / URRWXCal2) (Rickettsia azadi).